Here is a 242-residue protein sequence, read N- to C-terminus: Terpene cyclase dpfgB (242 aa).

The next 7 helical transmembrane spans lie at 15–37 (DVAWIADTCKLLMGIGWTTNYVG), 51–71 (ALMALCCNFAWELTYALIYPF), 75–95 (LEMYVHFSGLMLNCGVMYTAV), 112–132 (LPLIFIICVSGFMSGHVALAA), 141–161 (AWSAYGCQLLLSVGGLCQLLC), 169–189 (SYFLWFSRFFGSLVLVPQDIL), and 205–225 (LYIWFVCIFLLLDGSYGICLW).

The protein belongs to the paxB family.

It is found in the membrane. The protein operates within secondary metabolite biosynthesis; terpenoid biosynthesis. Terpene cyclase; part of the gene cluster that mediates the biosynthesis of diterpenoid pyrones. The first step of the pathway is the synthesis of the alpha-pyrone moiety by the polyketide synthase dpfgA via condensation of one acetyl-CoA starter unit with 3 malonyl-CoA units and 2 methylations. The alpha-pyrone is then combined with geranylgeranyl pyrophosphate (GGPP) formed by the GGPP synthase dpfgD through the action of the prenyltransferase dpfgC to yield a linear alpha-pyrone diterpenoid. Subsequent steps in the diterpenoid pyrone biosynthetic pathway involve the decalin core formation, which is initiated by the epoxidation of the C10-C11 olefin by the FAD-dependent oxidoreductase dpfgE, and is followed by a cyclization cascade catalyzed by the terpene cyclase dpfgB. The short chain dehydrogenase/reductase dpfgG then oxidizes the 8S hydroxy group to a ketone and the short chain dehydrogenase/reductase dpfgH reduces the ketone to the 8R hydroxy group to yield higginsianin B. Higginsianin B is further methylated by the methyltransferase dpfgI to produce the intermediate named FDDP B. The cytochrome P450 monooxygenase dfgpJ then catalyzes a three-step oxidation at C-27 to generate a carboxylic acid as well as C-26 hydroxylation. Finally, methyltransferase dpfgK methylates the carboxylic acid generated by dpfgJ, yielding the final diterpenoid pyrones from the pathway which were named FDDP D and FDDP E. In Gibberella zeae (strain ATCC MYA-4620 / CBS 123657 / FGSC 9075 / NRRL 31084 / PH-1) (Wheat head blight fungus), this protein is Terpene cyclase dpfgB.